The following is a 530-amino-acid chain: MLDANLKTQLTAYLERVTRPIQINASIDDSAGSREMLDLLEELVLLSDKISLDIHRDDNQRKPSFALTTPGQDISLRFAGLPMGHEFTSLVLALLQVGGHPSKAAAELIEQVQHLEGDYQFETYFSLSCQNCPDVVQALNLAAVLNPRIKHVAIDGAWFQDEVQARQIMSVPTVYLNGELFDQGRMTLEQIVAKLDTNAAKRDAAKIAAKEAFDVLVVGGGPAGSAAAVYAARKGIRTGVAAERFGGQVLDTMSIENFISVPETEGPKMAAALEQHVRQYDVDIMNLQRAEQLIPAGADGLIEIKLANGASLKSKTVILSTGARWRQMNVPGEDQYKNKGVAYCPHCDGPLFKGKRVAVIGGGNSGVEAAIDLAGIVAHVTLVEFDDKLRADEVLQRKLRSLHNVRIITSAQTTEVLGDGQKVTGLVYKDRTGGDIQHIELEGVFVQIGLLPNTEFLRGTVALSPRGEIIVDDRGQTDVPGVFAAGDATTVPYKQIVIAMGEGSKAALSAFDHLIRTSAPATADSVAQAA.

Residue 214–229 (DVLVVGGGPAGSAAAV) coordinates FAD. Cys344 and Cys347 are disulfide-bonded. 356–370 (RVAVIGGGNSGVEAA) is a binding site for NAD(+). 477-487 (TDVPGVFAAGD) is an FAD binding site.

This sequence belongs to the class-II pyridine nucleotide-disulfide oxidoreductase family. As to quaternary structure, homodimer. FAD is required as a cofactor.

Functionally, serves to protect the cell against DNA damage by alkyl hydroperoxides. It can use either NADH or NADPH as electron donor for direct reduction of redox dyes or of alkyl hydroperoxides when combined with the AhpC protein. The chain is Alkyl hydroperoxide reductase subunit F (ahpF) from Xanthomonas campestris pv. phaseoli.